The sequence spans 425 residues: Serine--tRNA ligase (425 aa).

233–235 (TAE) serves as a coordination point for L-serine. 264-266 (RRE) serves as a coordination point for ATP. Glu-287 lines the L-serine pocket. Residue 351 to 354 (EVSS) participates in ATP binding. Ser-386 provides a ligand contact to L-serine.

This sequence belongs to the class-II aminoacyl-tRNA synthetase family. Type-1 seryl-tRNA synthetase subfamily. Homodimer. The tRNA molecule binds across the dimer.

The protein localises to the cytoplasm. The enzyme catalyses tRNA(Ser) + L-serine + ATP = L-seryl-tRNA(Ser) + AMP + diphosphate + H(+). It catalyses the reaction tRNA(Sec) + L-serine + ATP = L-seryl-tRNA(Sec) + AMP + diphosphate + H(+). The protein operates within aminoacyl-tRNA biosynthesis; selenocysteinyl-tRNA(Sec) biosynthesis; L-seryl-tRNA(Sec) from L-serine and tRNA(Sec): step 1/1. In terms of biological role, catalyzes the attachment of serine to tRNA(Ser). Is also able to aminoacylate tRNA(Sec) with serine, to form the misacylated tRNA L-seryl-tRNA(Sec), which will be further converted into selenocysteinyl-tRNA(Sec). The polypeptide is Serine--tRNA ligase (Thermosipho melanesiensis (strain DSM 12029 / CIP 104789 / BI429)).